The following is a 299-amino-acid chain: Class II hydrophobin C (299 aa).

The signal sequence occupies residues 1 to 17 (MKFLTVAAAIFASTSLA). N-linked (GlcNAc...) asparagine glycans are attached at residues Asn-39, Asn-78, and Asn-91. Intrachain disulfides connect Cys-232-Cys-281, Cys-242-Cys-272, Cys-243-Cys-255, and Cys-282-Cys-293.

It belongs to the cerato-ulmin hydrophobin family.

The protein resides in the secreted. It localises to the cell wall. Its subcellular location is the vacuole. The protein localises to the cytoplasmic vesicle. Aerial growth, conidiation, and dispersal of filamentous fungi in the environment rely upon a capability of their secreting small amphipathic proteins called hydrophobins (HPBs) with low sequence identity. Class I can self-assemble into an outermost layer of rodlet bundles on aerial cell surfaces, conferring cellular hydrophobicity that supports fungal growth, development and dispersal; whereas Class II form highly ordered films at water-air interfaces through intermolecular interactions but contribute nothing to the rodlet structure. Hyd2C contributes to certain cell wall-related features, such as hydrophobicity but is not involved in cell wall-related events during fungal proliferation in host hemocoel. Does not contribute to conidial hydrophobicity. Involved actively in the asexual development. The chain is Class II hydrophobin C from Beauveria bassiana (strain ARSEF 2860) (White muscardine disease fungus).